The chain runs to 747 residues: Pseudouridine-metabolizing bifunctional protein C1861.05 (747 aa).

The tract at residues 1–379 (MLIVMNRGCR…KVSDKGVSSS (379 aa)) is pseudouridine-5'-phosphate glycosidase. The active-site Proton donor; for PsiMP glycosidase activity is the E61. 2 residues coordinate substrate: K123 and V143. Residue D175 participates in Mn(2+) binding. Position 177–179 (177–179 (SAD)) interacts with substrate. Residue K196 is the Nucleophile; for PsiMP glycosidase activity of the active site. Positions 380–747 (KKKITETTSK…VNPEIKTLLK (368 aa)) are pseudouridine kinase.

It in the N-terminal section; belongs to the pseudouridine-5'-phosphate glycosidase family. The protein in the C-terminal section; belongs to the carbohydrate kinase PfkB family. Mn(2+) is required as a cofactor.

The protein resides in the cytoplasm. The enzyme catalyses D-ribose 5-phosphate + uracil = psi-UMP + H2O. It catalyses the reaction pseudouridine + ATP = psi-UMP + ADP + H(+). Functionally, bifunctional enzyme that catalyzes the phosphorylation of pseudouridine to pseudouridine 5'-phosphate (PsiMP), and the reversible cleavage of pseudouridine 5'-phosphate to ribose 5-phosphate and uracil. Is involved in a pseudouridine degradation pathway. This Schizosaccharomyces pombe (strain 972 / ATCC 24843) (Fission yeast) protein is Pseudouridine-metabolizing bifunctional protein C1861.05.